The following is a 929-amino-acid chain: Pyruvate dehydrogenase E1 component (929 aa).

Lysine 375 participates in a covalent cross-link: Isoglutamyl lysine isopeptide (Lys-Gln) (interchain with Q-Cter in protein Pup).

As to quaternary structure, homodimer. Part of the PDH complex, consisting of multiple copies of AceE (E1), DlaT (E2) and Lpd (E3). Requires Mg(2+) as cofactor. It depends on thiamine diphosphate as a cofactor.

The enzyme catalyses N(6)-[(R)-lipoyl]-L-lysyl-[protein] + pyruvate + H(+) = N(6)-[(R)-S(8)-acetyldihydrolipoyl]-L-lysyl-[protein] + CO2. Functionally, component of the pyruvate dehydrogenase (PDH) complex, that catalyzes the overall conversion of pyruvate to acetyl-CoA and CO(2). AceE has reductase activity with pyruvate but does not react with 2-oxoglutarate. This chain is Pyruvate dehydrogenase E1 component (aceE), found in Mycolicibacterium smegmatis (strain ATCC 700084 / mc(2)155) (Mycobacterium smegmatis).